We begin with the raw amino-acid sequence, 463 residues long: MESSSNSDQNEGTPTSSVSSPYRRTYSDISGLSHRFDVQSFYNRPSNTNAVVLSGHEEDVSEDAEEPKDDVVNDVHGDGDEEDSDIDSAEDAELEMMRERFAKLLLGEDMSGSGKGVCTAVTVSNSITNLYATVFGQSLRLQPLSTEKKDLWKREMNCFMSICDYIVEVIPRSLGTNVEITETKLRSDILMSLPALRKLDNMLMEILDSFTENEFWYVERGSSSMNSGGGGRDSGTFRKVVVQRKDEKWWLPVPCVPAEGLSEEERKHLRHKRDCASQIHKAALAINDSTLNDMDIPDSYLTTLPKSGKASVGDVIYKQLCTAEKFYPDQLLDILKITSEHEALELADKVEASLVTWRRKTGGLTHSKSSWDMMKDISGDADRGNDKNHILAARARSLLFCLKQRYPELSQTSLDICKIQFNRDVGKAVLESYSRVLEGLAYNVVSWIDDVLYVDRTVRNRDD.

Disordered stretches follow at residues 1–25 (MESS…YRRT) and 55–87 (GHEE…SDID). Residues 59 to 68 (DVSEDAEEPK) show a composition bias toward acidic residues. The span at 69–78 (DDVVNDVHGD) shows a compositional bias: basic and acidic residues. A PRONE domain is found at 84–463 (SDIDSAEDAE…VDRTVRNRDD (380 aa)).

Interacts with ARAC10/ROP11. As to expression, expressed in root vascular tissue and trichoblast cell files. Expressed in root metaxylem cell files. Expressed in guard cells of cotyledons, rosette leaves, sepals, petal, stigmas and siliques. Expressed in root metaxylem cell files.

The protein resides in the cytoplasm. It localises to the cell membrane. Guanine-nucleotide exchange factor (GEF) that acts as an activator of Rop (Rho of plants) GTPases by promoting the exchange of GDP for GTP. In association with ROPGEF1, acts as a specific regulator of ARAC10/ROP11 function in ABA-mediated stomatal closure. In Arabidopsis thaliana (Mouse-ear cress), this protein is Rop guanine nucleotide exchange factor 4 (ROPGEF4).